The sequence spans 276 residues: Triple specificity protein phosphatase PtpB (276 aa).

Cys-160 serves as the catalytic Phosphocysteine intermediate. The segment at 232–250 (LGVRAEYLAAARQTIDETY) is UIM-like region.

It belongs to the protein-tyrosine phosphatase family. As to quaternary structure, interacts (via UIM-like region) with host ubiquitin; activating the phosphatidylinositol phosphate phosphatase activity.

The protein resides in the secreted. It localises to the host cytoplasm. The protein localises to the host cell membrane. The enzyme catalyses O-phospho-L-tyrosyl-[protein] + H2O = L-tyrosyl-[protein] + phosphate. The catalysed reaction is O-phospho-L-seryl-[protein] + H2O = L-seryl-[protein] + phosphate. It carries out the reaction O-phospho-L-threonyl-[protein] + H2O = L-threonyl-[protein] + phosphate. It catalyses the reaction 1,2-dioctanoyl-sn-glycero-3-phospho-(1-D-myo-inositol-3-phosphate) + H2O = 1,2-dioctanoyl-sn-glycero-3-phospho-(1D-myo-inositol) + phosphate. The enzyme catalyses 1,2-dioctanoyl-sn-glycero-3-phospho-(1-D-myo-inositol-4-phosphate) + H2O = 1,2-dioctanoyl-sn-glycero-3-phospho-(1D-myo-inositol) + phosphate. The catalysed reaction is 1,2-dioctanoyl-sn-glycero-3-phospho-(1D-myo-inositol-5-phosphate) + H2O = 1,2-dioctanoyl-sn-glycero-3-phospho-(1D-myo-inositol) + phosphate. Its activity is regulated as follows. Binding to host ubiquitin is required to activate the phosphatidylinositol phosphate phosphatase activity. Phosphatase activity is inhibited by sodium orthovanadate, a specific inhibitor of tyrosine phosphatases, but not by okadaic acid, an inhibitor of serine/threonine phosphatases. Inhibition of the enzyme reduces mycobacterial survival in infected macrophages. Inhibitors also enhance killing efficacy by first-line antibiotics. Its function is as follows. Essential virulence factor that promotes mycobacterial survival within host macrophages. Acts as a phosphatase that possesses triple substrate specificity toward phosphotyrosine, phosphoserine/threonine and phosphoinositides. Supports mycobacteria survival during infection by modulating the normal host signaling pathways, attenuating the bactericidal immune responses and promoting the host cell survival. Inhibits host pyroptosis by disrupting the membrane localization of host gasdermin-D (GSDMD): acts by catalyzing dephosphorylation of phosphatidylinositol (4,5)-bisphosphate and phosphatidylinositol 4-phosphate, thereby inhibiting the membrane targeting of GSDMD and subsequent cytokine release and pyroptosis. Inhibits host inflammatory responses and apoptosis through impeding the NF-kappa-B and MAPK signal pathways and TP53/p53 expression in the macrophage. Blocks the IL6/IL-6 production by down-regulating ERK1/2, p38 and p65 activity. Prevents macrophage cell death by activating the Akt pathway and blocking caspase 3 activity. Reduces the expression of iNOS in activated macrophages and inhibits the generation of destroying reactive nitrogen intermediate NO. In Mycobacterium tuberculosis (strain ATCC 25618 / H37Rv), this protein is Triple specificity protein phosphatase PtpB.